An 87-amino-acid chain; its full sequence is MKLSIFFVLFFIAIAYCQPEFLDDEEDEVEETLPVAEEGREKSCITWRNSCMHNDKGCCFPWSCVCWSQTVSRNSSRKEKKCQCRLW.

Residues 1–17 (MKLSIFFVLFFIAIAYC) form the signal peptide. The propeptide occupies 18 to 40 (QPEFLDDEEDEVEETLPVAEEGR). 4 disulfides stabilise this stretch: C44–C59, C51–C64, C58–C84, and C66–C82.

The protein belongs to the neurotoxin omega-lctx family. As to expression, expressed by the venom gland.

The protein resides in the secreted. In terms of biological role, modulates Cav2.1/CACNA1A voltage-gated calcium channels (P/Q-type currents) in rat cerebellar Purkinje cells and hippocampal CA1-CA3 neurons. At saturating concentrations (&gt;10 nM) decelerates activation kinetics and slightly increases peak amplitude without affecting deactivation kinetics. In vivo, does not cause death when intravenously injected into mice. In rat models, through its activity on Cav2.1/CACNA1A, has an ameliorative effect on memory defects provoked by hyperstimulation of N-methyl-D-aspartate receptors (NMDARs) in the hippocampus. The sequence is that of Omega-lycotoxin-Am1a from Alopecosa marikovskyi (Wolf spider).